A 250-amino-acid chain; its full sequence is 1-(5-phosphoribosyl)-5-[(5-phosphoribosylamino)methylideneamino] imidazole-4-carboxamide isomerase (250 aa).

Asp-10 (proton acceptor) is an active-site residue. The active-site Proton donor is Asp-131.

This sequence belongs to the HisA/HisF family.

It is found in the cytoplasm. The catalysed reaction is 1-(5-phospho-beta-D-ribosyl)-5-[(5-phospho-beta-D-ribosylamino)methylideneamino]imidazole-4-carboxamide = 5-[(5-phospho-1-deoxy-D-ribulos-1-ylimino)methylamino]-1-(5-phospho-beta-D-ribosyl)imidazole-4-carboxamide. The protein operates within amino-acid biosynthesis; L-histidine biosynthesis; L-histidine from 5-phospho-alpha-D-ribose 1-diphosphate: step 4/9. This chain is 1-(5-phosphoribosyl)-5-[(5-phosphoribosylamino)methylideneamino] imidazole-4-carboxamide isomerase, found in Desulfitobacterium hafniense (strain DSM 10664 / DCB-2).